Consider the following 505-residue polypeptide: Forkhead box protein O4 (505 aa).

3 disordered regions span residues 1–66 (MDPE…HSEP), 175–244 (SSWW…SPCP), and 257–276 (RPRS…PMRP). Phosphothreonine; by PKB/AKT1 is present on threonine 32. Residues 97-215 (RRNAWGNQSY…RGRSKGPKKK (119 aa)) are required for interaction with FOXK1. Positions 100–188 (AWGNQSYAEL…MLNPDGGKGG (89 aa)) form a DNA-binding region, fork-head. Serine 197 is subject to Phosphoserine; by PKB/AKT1. Basic residues predominate over residues 205–216 (LRGRSKGPKKKP). Residues 257 to 271 (RPRSSSNASTVSTRL) show a composition bias toward polar residues. Phosphoserine; by PKB/AKT1 is present on serine 262.

In terms of assembly, interacts with CREBBP/CBP, MYOCD, SIRT1, SRF and YWHAZ. Acetylated by CREBBP/CBP and deacetylated by SIRT1. Binding of YWHAZ inhibits DNA-binding. Interacts with USP7; the interaction is enhanced in presence of hydrogen peroxide and occurs independently of TP53. Interacts with NLK, and this inhibits monoubiquitination and transcriptional activity. Interacts with FOXK1; the interaction inhibits MEF2C transactivation activity. Acetylation by CREBBP/CBP is induced by oxidative stress and inhibits transcriptional activity. Deacetylation by SIRT1 is NAD-dependent and stimulates transcriptional activity. Post-translationally, phosphorylation by PKB/AKT1 inhibits transcriptional activity and is responsible for cytoplasmic localization. May be phosphorylated at multiple sites by NLK. In terms of processing, monoubiquitinated; monoubiquitination is induced by oxidative stress and reduced by deacetylase inhibitors; results in its relocalization to the nucleus and its increased transcriptional activity. Deubiquitinated by USP7; deubiquitination is induced by oxidative stress; enhances its interaction with USP7 and consequently, deubiquitination; increases its translocation to the cytoplasm and inhibits its transcriptional activity. Hydrogene-peroxide-induced ubiquitination and USP7-mediated deubiquitination have no major effect on its protein stability. As to expression, strongly expressed in brown adipose tissue and weakly in white adipose tissue (at protein level). Expressed in skeletal muscle.

It localises to the cytoplasm. Its subcellular location is the nucleus. Transcription factor involved in the regulation of the insulin signaling pathway. Binds to insulin-response elements (IREs) and can activate transcription of IGFBP1. Down-regulates expression of HIF1A and suppresses hypoxia-induced transcriptional activation of HIF1A-modulated genes. Also involved in negative regulation of the cell cycle. Involved in increased proteasome activity in embryonic stem cells (ESCs) by activating expression of PSMD11 in ESCs, leading to enhanced assembly of the 26S proteasome, followed by higher proteasome activity. Represses smooth muscle cell differentiation by inhibiting the transcriptional coactivator activity of myocardin. The polypeptide is Forkhead box protein O4 (Foxo4) (Mus musculus (Mouse)).